A 244-amino-acid polypeptide reads, in one-letter code: Phosphoadenosine 5'-phosphosulfate reductase (244 aa).

Cysteine 239 functions as the Nucleophile; cysteine thiosulfonate intermediate in the catalytic mechanism.

It belongs to the PAPS reductase family. CysH subfamily.

Its subcellular location is the cytoplasm. It carries out the reaction [thioredoxin]-disulfide + sulfite + adenosine 3',5'-bisphosphate + 2 H(+) = [thioredoxin]-dithiol + 3'-phosphoadenylyl sulfate. It functions in the pathway sulfur metabolism; hydrogen sulfide biosynthesis; sulfite from sulfate: step 3/3. In terms of biological role, catalyzes the formation of sulfite from phosphoadenosine 5'-phosphosulfate (PAPS) using thioredoxin as an electron donor. The polypeptide is Phosphoadenosine 5'-phosphosulfate reductase (Citrobacter koseri (strain ATCC BAA-895 / CDC 4225-83 / SGSC4696)).